A 517-amino-acid polypeptide reads, in one-letter code: Crotonobetaine/carnitine--CoA ligase (517 aa).

Belongs to the ATP-dependent AMP-binding enzyme family.

It carries out the reaction 4-(trimethylamino)butanoate + ATP + CoA = 4-(trimethylamino)butanoyl-CoA + AMP + diphosphate. The catalysed reaction is crotonobetaine + ATP + CoA = crotonobetainyl-CoA + AMP + diphosphate. The enzyme catalyses (R)-carnitine + ATP + CoA = (R)-carnitinyl-CoA + AMP + diphosphate. Its pathway is amine and polyamine metabolism; carnitine metabolism. In terms of biological role, catalyzes the transfer of CoA to carnitine, generating the initial carnitinyl-CoA needed for the CaiB reaction cycle. Also has activity toward crotonobetaine and gamma-butyrobetaine. In Salmonella paratyphi A (strain ATCC 9150 / SARB42), this protein is Crotonobetaine/carnitine--CoA ligase.